A 1442-amino-acid polypeptide reads, in one-letter code: DNA polymerase III PolC-type (1442 aa).

Residues 409-568 (YVIFDIETTG…YDAIVLADVF (160 aa)) enclose the Exonuclease domain.

The protein belongs to the DNA polymerase type-C family. PolC subfamily.

Its subcellular location is the cytoplasm. The enzyme catalyses DNA(n) + a 2'-deoxyribonucleoside 5'-triphosphate = DNA(n+1) + diphosphate. In terms of biological role, required for replicative DNA synthesis. This DNA polymerase also exhibits 3' to 5' exonuclease activity. This chain is DNA polymerase III PolC-type, found in Ureaplasma parvum serovar 3 (strain ATCC 700970).